A 94-amino-acid polypeptide reads, in one-letter code: Myosuppressin (94 aa).

The N-terminal stretch at Met1 to Gly24 is a signal peptide. Positions Ala25–Arg80 are excised as a propeptide. Gln81 is modified (pyrrolidone carboxylic acid). Phe90 is modified (phenylalanine amide).

Expressed throughout the nervous system (at protein level).

It is found in the secreted. Its function is as follows. Myoinhibiting neuropeptide. The sequence is that of Myosuppressin from Camponotus floridanus (Florida carpenter ant).